Reading from the N-terminus, the 264-residue chain is ORC1-type DNA replication protein 2 (264 aa).

Residues 73–77, tyrosine 220, and arginine 232 contribute to the ATP site; that span reads TGKSL.

Belongs to the CDC6/cdc18 family.

In terms of biological role, involved in regulation of DNA replication. The sequence is that of ORC1-type DNA replication protein 2 (orc2) from Halobacterium salinarum (strain ATCC 700922 / JCM 11081 / NRC-1) (Halobacterium halobium).